The sequence spans 323 residues: DNA primase small subunit PriS (323 aa).

Residues aspartate 97, aspartate 99, and aspartate 274 contribute to the active site.

This sequence belongs to the eukaryotic-type primase small subunit family. In terms of assembly, heterodimer of a small subunit (PriS) and a large subunit (PriL). It depends on Mg(2+) as a cofactor. Mn(2+) serves as cofactor.

Catalytic subunit of DNA primase, an RNA polymerase that catalyzes the synthesis of short RNA molecules used as primers for DNA polymerase during DNA replication. The small subunit contains the primase catalytic core and has DNA synthesis activity on its own. Binding to the large subunit stabilizes and modulates the activity, increasing the rate of DNA synthesis while decreasing the length of the DNA fragments, and conferring RNA synthesis capability. The DNA polymerase activity may enable DNA primase to also catalyze primer extension after primer synthesis. May also play a role in DNA repair. This chain is DNA primase small subunit PriS, found in Methanothermobacter thermautotrophicus (strain ATCC 29096 / DSM 1053 / JCM 10044 / NBRC 100330 / Delta H) (Methanobacterium thermoautotrophicum).